The primary structure comprises 420 residues: MTTQLLEDITHRGLVSQVSDLAQLEQLLATSQVVYCGFDPTAGSLHIGHLVPLLMLKRFNDAGHKAVALIGGATGLIGDPSFKATERSLNSKETVQGWVADLSSQVESVMNPHLSEPIQLKNNADWFSGIEVLDFFRDVGKHFSINNMINRESVKQRLQRPDQGLSFTEFSYTLLQSYDFAKLNSELGCSVQIGGNDQWGNIVSGIDLTRRLNKQTVYGLTLPLITKSDGTKFGKTEGGAIWLDPKKTSPYRFYQFWLNCDDADVYNFLRFYTFLSVKEIEAIEANDITSQQKPQAQGILAEQLTRFVHGEQGLASAQRITQLLFNGQVQTLTLAELEQLEQDGLAVHAISDAKINIAELLVKSELASSKRTARELINANAIKINGEAITDEHAQLDFPLFDRFWVMQRGKKQFRLIKLA.

Tyr35 lines the L-tyrosine pocket. Residues 40 to 49 (PTAGSLHIGH) carry the 'HIGH' region motif. L-tyrosine-binding residues include Tyr172 and Gln176. The 'KMSKS' region signature appears at 232 to 236 (KFGKT). Lys235 contributes to the ATP binding site. The S4 RNA-binding domain occupies 355–419 (INIAELLVKS…GKKQFRLIKL (65 aa)).

It belongs to the class-I aminoacyl-tRNA synthetase family. TyrS type 1 subfamily. Homodimer.

The protein resides in the cytoplasm. The enzyme catalyses tRNA(Tyr) + L-tyrosine + ATP = L-tyrosyl-tRNA(Tyr) + AMP + diphosphate + H(+). Its function is as follows. Catalyzes the attachment of tyrosine to tRNA(Tyr) in a two-step reaction: tyrosine is first activated by ATP to form Tyr-AMP and then transferred to the acceptor end of tRNA(Tyr). The polypeptide is Tyrosine--tRNA ligase 1 (Pseudoalteromonas translucida (strain TAC 125)).